Consider the following 298-residue polypeptide: 4-hydroxy-tetrahydrodipicolinate synthase (298 aa).

Thr-45 is a binding site for pyruvate. The active-site Proton donor/acceptor is the Tyr-133. The Schiff-base intermediate with substrate role is filled by Lys-161. Ile-203 is a binding site for pyruvate.

It belongs to the DapA family. As to quaternary structure, homotetramer; dimer of dimers.

Its subcellular location is the cytoplasm. The enzyme catalyses L-aspartate 4-semialdehyde + pyruvate = (2S,4S)-4-hydroxy-2,3,4,5-tetrahydrodipicolinate + H2O + H(+). The protein operates within amino-acid biosynthesis; L-lysine biosynthesis via DAP pathway; (S)-tetrahydrodipicolinate from L-aspartate: step 3/4. Catalyzes the condensation of (S)-aspartate-beta-semialdehyde [(S)-ASA] and pyruvate to 4-hydroxy-tetrahydrodipicolinate (HTPA). The protein is 4-hydroxy-tetrahydrodipicolinate synthase of Wigglesworthia glossinidia brevipalpis.